Here is a 561-residue protein sequence, read N- to C-terminus: Dihydroxy-acid dehydratase (561 aa).

Position 51 (Cys51) interacts with [2Fe-2S] cluster. Residue Asp83 participates in Mg(2+) binding. Cys124 is a binding site for [2Fe-2S] cluster. Mg(2+)-binding residues include Asp125 and Lys126. An N6-carboxylysine modification is found at Lys126. Cys196 is a [2Fe-2S] cluster binding site. Glu447 is a Mg(2+) binding site. Catalysis depends on Ser473, which acts as the Proton acceptor.

The protein belongs to the IlvD/Edd family. In terms of assembly, homodimer. [2Fe-2S] cluster serves as cofactor. Mg(2+) is required as a cofactor.

The enzyme catalyses (2R)-2,3-dihydroxy-3-methylbutanoate = 3-methyl-2-oxobutanoate + H2O. It carries out the reaction (2R,3R)-2,3-dihydroxy-3-methylpentanoate = (S)-3-methyl-2-oxopentanoate + H2O. It participates in amino-acid biosynthesis; L-isoleucine biosynthesis; L-isoleucine from 2-oxobutanoate: step 3/4. It functions in the pathway amino-acid biosynthesis; L-valine biosynthesis; L-valine from pyruvate: step 3/4. Functionally, functions in the biosynthesis of branched-chain amino acids. Catalyzes the dehydration of (2R,3R)-2,3-dihydroxy-3-methylpentanoate (2,3-dihydroxy-3-methylvalerate) into 2-oxo-3-methylpentanoate (2-oxo-3-methylvalerate) and of (2R)-2,3-dihydroxy-3-methylbutanoate (2,3-dihydroxyisovalerate) into 2-oxo-3-methylbutanoate (2-oxoisovalerate), the penultimate precursor to L-isoleucine and L-valine, respectively. The sequence is that of Dihydroxy-acid dehydratase from Oceanobacillus iheyensis (strain DSM 14371 / CIP 107618 / JCM 11309 / KCTC 3954 / HTE831).